A 294-amino-acid polypeptide reads, in one-letter code: 4-hydroxy-tetrahydrodipicolinate synthase (294 aa).

Thr47 lines the pyruvate pocket. The active-site Proton donor/acceptor is Tyr135. Residue Lys164 is the Schiff-base intermediate with substrate of the active site. Position 206 (Val206) interacts with pyruvate.

This sequence belongs to the DapA family. As to quaternary structure, homotetramer; dimer of dimers.

The protein resides in the cytoplasm. It carries out the reaction L-aspartate 4-semialdehyde + pyruvate = (2S,4S)-4-hydroxy-2,3,4,5-tetrahydrodipicolinate + H2O + H(+). The protein operates within amino-acid biosynthesis; L-lysine biosynthesis via DAP pathway; (S)-tetrahydrodipicolinate from L-aspartate: step 3/4. Its function is as follows. Catalyzes the condensation of (S)-aspartate-beta-semialdehyde [(S)-ASA] and pyruvate to 4-hydroxy-tetrahydrodipicolinate (HTPA). The polypeptide is 4-hydroxy-tetrahydrodipicolinate synthase (Lachnoclostridium phytofermentans (strain ATCC 700394 / DSM 18823 / ISDg) (Clostridium phytofermentans)).